A 513-amino-acid chain; its full sequence is ATP synthase subunit alpha 2 (513 aa).

Residue 169 to 176 (GDRQVGKT) coordinates ATP.

This sequence belongs to the ATPase alpha/beta chains family. In terms of assembly, F-type ATPases have 2 components, CF(1) - the catalytic core - and CF(0) - the membrane proton channel. CF(1) has five subunits: alpha(3), beta(3), gamma(1), delta(1), epsilon(1). CF(0) has three main subunits: a(1), b(2) and c(9-12). The alpha and beta chains form an alternating ring which encloses part of the gamma chain. CF(1) is attached to CF(0) by a central stalk formed by the gamma and epsilon chains, while a peripheral stalk is formed by the delta and b chains.

It localises to the cell inner membrane. The enzyme catalyses ATP + H2O + 4 H(+)(in) = ADP + phosphate + 5 H(+)(out). Functionally, produces ATP from ADP in the presence of a proton gradient across the membrane. The alpha chain is a regulatory subunit. The protein is ATP synthase subunit alpha 2 of Psychromonas ingrahamii (strain DSM 17664 / CCUG 51855 / 37).